The sequence spans 177 residues: Prorelaxin (177 aa).

The first 22 residues, 1-22 (MSCKFVLQLLGFWLLLSQPCRA), serve as a signal peptide directing secretion. 3 disulfides stabilise this stretch: cysteine 36/cysteine 164, cysteine 48/cysteine 177, and cysteine 163/cysteine 168. The propeptide at 64-149 (MTEEAVSSFI…LKSLYLDTLS (86 aa)) is connecting peptide. The tract at residues 80-114 (FDTMPNLSEKPKTALPEGHPSLPEQQQYVPVSSDS) is disordered. Over residues 102 to 114 (PEQQQYVPVSSDS) the composition is skewed to polar residues.

Belongs to the insulin family. As to quaternary structure, heterodimer of a B chain and an A chain linked by two disulfide bonds.

The protein localises to the secreted. In terms of biological role, relaxin is an ovarian hormone that acts with estrogen to produce dilatation of the birth canal in many mammals. It bears mature young, and allows separation of the pelvic bones. This chain is Prorelaxin (RLN), found in Mesocricetus auratus (Golden hamster).